We begin with the raw amino-acid sequence, 101 residues long: Small ribosomal subunit protein uS10 (101 aa).

The protein belongs to the universal ribosomal protein uS10 family. In terms of assembly, part of the 30S ribosomal subunit.

In terms of biological role, involved in the binding of tRNA to the ribosomes. In Amoebophilus asiaticus (strain 5a2), this protein is Small ribosomal subunit protein uS10.